The sequence spans 415 residues: Gamma-glutamyl phosphate reductase (415 aa).

This sequence belongs to the gamma-glutamyl phosphate reductase family.

Its subcellular location is the cytoplasm. The enzyme catalyses L-glutamate 5-semialdehyde + phosphate + NADP(+) = L-glutamyl 5-phosphate + NADPH + H(+). It functions in the pathway amino-acid biosynthesis; L-proline biosynthesis; L-glutamate 5-semialdehyde from L-glutamate: step 2/2. Its function is as follows. Catalyzes the NADPH-dependent reduction of L-glutamate 5-phosphate into L-glutamate 5-semialdehyde and phosphate. The product spontaneously undergoes cyclization to form 1-pyrroline-5-carboxylate. This Bacillus cereus (strain B4264) protein is Gamma-glutamyl phosphate reductase.